Here is a 773-residue protein sequence, read N- to C-terminus: DEAD-box ATP-dependent RNA helicase 32 (773 aa).

The segment at 28–71 (IDAGKPARGTRPPPLSKSSSSPADTAAAKRGAKGAGGVPSKAAG) is disordered. The span at 43 to 56 (SKSSSSPADTAAAK) shows a compositional bias: low complexity. The short motif at 80–108 (ARFDELPLSNKTKDGLRKAGYTEMSEIQR) is the Q motif element. The Helicase ATP-binding domain maps to 111–287 (LPHALCGRDV…RVSLKDPEYI (177 aa)). 124-131 (AKTGSGKT) contacts ATP. Residues 235 to 238 (DEAD) carry the DEAD box motif. The Helicase C-terminal domain maps to 309–462 (PLEQKLNMLW…IKKPNTEQLQ (154 aa)). Positions 664 to 715 (DKDKISQRYAEMLREMQEHDKEDKLEHKRILREKKLQKKLKLKRKRNEEMDA) form a coiled coil. Over residues 699–708 (LQKKLKLKRK) the composition is skewed to basic residues. Residues 699–755 (LQKKLKLKRKRNEEMDAGSENSGSESDRDQRTASKGKKRYFNSDDEEGSKDAAKDGD) form a disordered region.

Belongs to the DEAD box helicase family. DDX10/DBP4 subfamily.

It catalyses the reaction ATP + H2O = ADP + phosphate + H(+). The polypeptide is DEAD-box ATP-dependent RNA helicase 32 (Oryza sativa subsp. japonica (Rice)).